The primary structure comprises 84 residues: NADH dehydrogenase [ubiquinone] 1 alpha subcomplex subunit 3 (84 aa).

Ala2 carries the post-translational modification N-acetylalanine. Residues Leu19–Phe39 traverse the membrane as a helical segment. Positions Pro56–Leu84 are disordered.

Belongs to the complex I NDUFA3 subunit family. Complex I is composed of 45 different subunits.

It is found in the mitochondrion inner membrane. Functionally, accessory subunit of the mitochondrial membrane respiratory chain NADH dehydrogenase (Complex I), that is believed not to be involved in catalysis. Complex I functions in the transfer of electrons from NADH to the respiratory chain. The immediate electron acceptor for the enzyme is believed to be ubiquinone. This is NADH dehydrogenase [ubiquinone] 1 alpha subcomplex subunit 3 (NDUFA3) from Homo sapiens (Human).